A 218-amino-acid chain; its full sequence is Pyridoxine/pyridoxamine 5'-phosphate oxidase (218 aa).

Substrate-binding positions include 14–17 (RREY) and K72. FMN is bound by residues 67–72 (RIVLLK), 82–83 (YT), R88, K89, and Q111. Residues Y129, R133, and S137 each coordinate substrate. FMN is bound by residues 146-147 (QS) and W191. 197–199 (RLH) contributes to the substrate binding site. R201 serves as a coordination point for FMN.

The protein belongs to the pyridoxamine 5'-phosphate oxidase family. As to quaternary structure, homodimer. FMN is required as a cofactor.

The enzyme catalyses pyridoxamine 5'-phosphate + O2 + H2O = pyridoxal 5'-phosphate + H2O2 + NH4(+). It catalyses the reaction pyridoxine 5'-phosphate + O2 = pyridoxal 5'-phosphate + H2O2. The protein operates within cofactor metabolism; pyridoxal 5'-phosphate salvage; pyridoxal 5'-phosphate from pyridoxamine 5'-phosphate: step 1/1. It functions in the pathway cofactor metabolism; pyridoxal 5'-phosphate salvage; pyridoxal 5'-phosphate from pyridoxine 5'-phosphate: step 1/1. Functionally, catalyzes the oxidation of either pyridoxine 5'-phosphate (PNP) or pyridoxamine 5'-phosphate (PMP) into pyridoxal 5'-phosphate (PLP). This Salmonella paratyphi B (strain ATCC BAA-1250 / SPB7) protein is Pyridoxine/pyridoxamine 5'-phosphate oxidase.